The sequence spans 352 residues: MSILAEKLSSILKRYDELTALLSSAEVISDIKKLTELSKEQSSIEEISVASKEYLSVLENIKENKELLEDKELSELAKEELKILEIKKSDLETAIKQLLIPKDPNDDKNIYLELRAGTGGDEAGIFVGDLFKAYCRYADLKKWKVEIVSSSENSVGGYKEIIALIKGKGVYSRLKFEAGTHRVQRVPETESQGRIHTSAITVAIMPEVDDVEVSINSSDLKIEVFRAGGHGGQCVNTTDSAVRITHLPTNISVSMQDEKSQHKNKDKALKILKARLYEKQIEEQQLANAKDRKEQVGSGDRSERIRTYNYPQNRLSEHRINLTLYSLEEIMLSGNLDEVINPLIAHAQSQFE.

Gln233 carries the post-translational modification N5-methylglutamine. The tract at residues 288-309 (NAKDRKEQVGSGDRSERIRTYN) is disordered. Residues 289 to 306 (AKDRKEQVGSGDRSERIR) show a composition bias toward basic and acidic residues.

The protein belongs to the prokaryotic/mitochondrial release factor family. In terms of processing, methylated by PrmC. Methylation increases the termination efficiency of RF1.

The protein localises to the cytoplasm. Peptide chain release factor 1 directs the termination of translation in response to the peptide chain termination codons UAG and UAA. In Helicobacter pylori (strain Shi470), this protein is Peptide chain release factor 1.